A 213-amino-acid chain; its full sequence is Uracil phosphoribosyltransferase (213 aa).

Residues Arg-78, Arg-103, and 131–139 each bind 5-phospho-alpha-D-ribose 1-diphosphate; that span reads DPMLATGGT. Uracil is bound by residues Ile-197 and 202–204; that span reads GDA. Asp-203 contributes to the 5-phospho-alpha-D-ribose 1-diphosphate binding site.

This sequence belongs to the UPRTase family. Mg(2+) is required as a cofactor.

It carries out the reaction UMP + diphosphate = 5-phospho-alpha-D-ribose 1-diphosphate + uracil. Its pathway is pyrimidine metabolism; UMP biosynthesis via salvage pathway; UMP from uracil: step 1/1. Allosterically activated by GTP. Functionally, catalyzes the conversion of uracil and 5-phospho-alpha-D-ribose 1-diphosphate (PRPP) to UMP and diphosphate. The sequence is that of Uracil phosphoribosyltransferase from Bifidobacterium adolescentis (strain ATCC 15703 / DSM 20083 / NCTC 11814 / E194a).